A 722-amino-acid polypeptide reads, in one-letter code: Homeobox-leucine zipper protein HDG11 (722 aa).

The span at M1–G19 shows a compositional bias: gly residues. The disordered stretch occupies residues M1–Q42. The segment covering G20–R31 has biased composition (basic and acidic residues). A DNA-binding region (homeobox) is located at residues K32–H91. Residues Q81–K161 are a coiled coil. An START domain is found at S227–S460.

It belongs to the HD-ZIP homeobox family. Class IV subfamily. In terms of assembly, interacts with BBM. As to expression, expressed in apical meristems and young epidermal tissue including trichomes and stipules. Expressed in lateral root tips, the L1 layer of apical inflorescence meristems and early flower primordia, carpel and petal epidermis, stigma papillae, ovule primordia, nucellus and embryo.

It localises to the nucleus. In terms of biological role, transcription factor which acts as a positive regulator of drought stress tolerance. Can transactivate CIPK3, NCED3 and ERECTA. Transactivates several cell-wall-loosening protein genes by directly binding to HD motifs in their promoters. These target genes play important roles in coordinating cell-wall extensibility with root development and growth. Transactivates CYP74A/AOS, AOC3, OPR3 and 4CLL5/OPCL1 genes by directly binding to HD motifs in their promoters. These target genes are involved in jasmonate (JA) biosynthesis, and JA signaling affects root architecture by activating auxin signaling, which promotes lateral root formation. Acts as a negative regulator of trichome branching. Required for the establishment of giant cell identity on the abaxial side of sepals. Seems to promote cell differentiation. May regulate cell differentiation and proliferation during root and shoot meristem development. This chain is Homeobox-leucine zipper protein HDG11, found in Arabidopsis thaliana (Mouse-ear cress).